The chain runs to 372 residues: UDP-N-acetylglucosamine--N-acetylmuramyl-(pentapeptide) pyrophosphoryl-undecaprenol N-acetylglucosamine transferase (372 aa).

Residues 21 to 23, Asn-135, Arg-172, Ser-206, and Gln-303 contribute to the UDP-N-acetyl-alpha-D-glucosamine site; that span reads TAG.

It belongs to the glycosyltransferase 28 family. MurG subfamily.

Its subcellular location is the cell membrane. It catalyses the reaction di-trans,octa-cis-undecaprenyl diphospho-N-acetyl-alpha-D-muramoyl-L-alanyl-D-glutamyl-meso-2,6-diaminopimeloyl-D-alanyl-D-alanine + UDP-N-acetyl-alpha-D-glucosamine = di-trans,octa-cis-undecaprenyl diphospho-[N-acetyl-alpha-D-glucosaminyl-(1-&gt;4)]-N-acetyl-alpha-D-muramoyl-L-alanyl-D-glutamyl-meso-2,6-diaminopimeloyl-D-alanyl-D-alanine + UDP + H(+). Its pathway is cell wall biogenesis; peptidoglycan biosynthesis. Functionally, cell wall formation. Catalyzes the transfer of a GlcNAc subunit on undecaprenyl-pyrophosphoryl-MurNAc-pentapeptide (lipid intermediate I) to form undecaprenyl-pyrophosphoryl-MurNAc-(pentapeptide)GlcNAc (lipid intermediate II). In Paenarthrobacter aurescens (strain TC1), this protein is UDP-N-acetylglucosamine--N-acetylmuramyl-(pentapeptide) pyrophosphoryl-undecaprenol N-acetylglucosamine transferase.